Consider the following 269-residue polypeptide: Shikimate dehydrogenase (NADP(+)) (269 aa).

Residues 15-17 and Thr-62 each bind shikimate; that span reads SLS. The active-site Proton acceptor is the Lys-66. Positions 86 and 100 each coordinate shikimate. Residues 124-128, 147-152, and Ile-211 each bind NADP(+); these read GAGGA and NRTPER. Position 213 (Tyr-213) interacts with shikimate. Gly-234 lines the NADP(+) pocket.

The protein belongs to the shikimate dehydrogenase family. Homodimer.

The enzyme catalyses shikimate + NADP(+) = 3-dehydroshikimate + NADPH + H(+). Its pathway is metabolic intermediate biosynthesis; chorismate biosynthesis; chorismate from D-erythrose 4-phosphate and phosphoenolpyruvate: step 4/7. Its function is as follows. Involved in the biosynthesis of the chorismate, which leads to the biosynthesis of aromatic amino acids. Catalyzes the reversible NADPH linked reduction of 3-dehydroshikimate (DHSA) to yield shikimate (SA). This is Shikimate dehydrogenase (NADP(+)) from Methanococcoides burtonii (strain DSM 6242 / NBRC 107633 / OCM 468 / ACE-M).